The following is a 169-amino-acid chain: Endoribonuclease YbeY (169 aa).

Zn(2+)-binding residues include His-128, His-132, and His-138.

This sequence belongs to the endoribonuclease YbeY family. Zn(2+) serves as cofactor.

Its subcellular location is the cytoplasm. Single strand-specific metallo-endoribonuclease involved in late-stage 70S ribosome quality control and in maturation of the 3' terminus of the 16S rRNA. The polypeptide is Endoribonuclease YbeY (Cyanothece sp. (strain PCC 7425 / ATCC 29141)).